The sequence spans 361 residues: Caffeic acid 3-O-methyltransferase 2 (361 aa).

128–134 is a binding site for substrate; that stretch reads MNQDKVL. A substrate binding region spans residues 160-178; it reads AFEYHGTDPRFNKVFNQGM. Residues Gly206, Asp229, Asp249, Met250, and Lys263 each contribute to the S-adenosyl-L-methionine site. Residue His267 is the Proton acceptor of the active site.

It belongs to the class I-like SAM-binding methyltransferase superfamily. Cation-independent O-methyltransferase family. COMT subfamily. As to quaternary structure, homodimer.

The catalysed reaction is (E)-caffeate + S-adenosyl-L-methionine = (E)-ferulate + S-adenosyl-L-homocysteine + H(+). Its pathway is aromatic compound metabolism; phenylpropanoid biosynthesis. Its function is as follows. Catalyzes the conversion of caffeic acid to ferulic acid and of 5-hydroxyferulic acid to sinapic acid. The resulting products may subsequently be converted to the corresponding alcohols that are incorporated into lignins. The protein is Caffeic acid 3-O-methyltransferase 2 (COMT2) of Ocimum basilicum (Sweet basil).